Consider the following 250-residue polypeptide: NAD(P)H-quinone oxidoreductase subunit K, chloroplastic (250 aa).

Positions 61, 62, 126, and 157 each coordinate [4Fe-4S] cluster.

The protein belongs to the complex I 20 kDa subunit family. As to quaternary structure, NDH is composed of at least 16 different subunits, 5 of which are encoded in the nucleus. It depends on [4Fe-4S] cluster as a cofactor.

The protein localises to the plastid. Its subcellular location is the chloroplast thylakoid membrane. It catalyses the reaction a plastoquinone + NADH + (n+1) H(+)(in) = a plastoquinol + NAD(+) + n H(+)(out). The catalysed reaction is a plastoquinone + NADPH + (n+1) H(+)(in) = a plastoquinol + NADP(+) + n H(+)(out). Functionally, NDH shuttles electrons from NAD(P)H:plastoquinone, via FMN and iron-sulfur (Fe-S) centers, to quinones in the photosynthetic chain and possibly in a chloroplast respiratory chain. The immediate electron acceptor for the enzyme in this species is believed to be plastoquinone. Couples the redox reaction to proton translocation, and thus conserves the redox energy in a proton gradient. This Angiopteris evecta (Mule's foot fern) protein is NAD(P)H-quinone oxidoreductase subunit K, chloroplastic.